The primary structure comprises 1317 residues: MTFYNYTIDKGRLKKLIALAYRRYGSARCSQLADELKELGFRFATKAGVSISVDDLTIPPEKKQMLEAAEKEIRTTEERYARGEITEVERFQKVIDTWNGTSEELKDQVVVNFRKTDPLNSVYMMAFSGARGNMSQVRQLVGMRGLMADPQGEIIDLPIKTNFREGLTVTEYVISSYGARKGLVDTALRTADSGYLTRRLVDVSQDVIVREQDCGTERSLRVTAMTDGDQVKISLADRLFGRLLAKDVVGPDGEIIAKRNDEIDEALANRIAAVTDEVYVRSPLTCEAARSVCQNCYGWSLAHGHKVDLGEAVGIIAAQSIGEPGTQLTMRTFHTGGVFTGEVARQEKAPEDGTVKWGKGLSTRKVRTRHGEDAEQVEIAGDLIWKGEGKKAATQTYSLTPGSLLFVQDGQTVTAGQLMTEISLSKTQRSTERATKDVAGDLAGEVLFDRLVPEEKTDRQGNTTRIAQRGGLVWILSGEVYNLPPGAEPVVKNDEQVEVGSIMAETKLVTNDGGVVRLVSNREIEIITASVLLDQAQVKLESSGGREQYVIYTADKQRFLLKAAPGTKVQNHSIVAELIDDRYRTTTGGMIRYAGVEVAKGGRKQGYEVTKGGTLLWIPEETHEINKDISLLIVEDGQYVEAGTEVVKDIFCQSSGIVEVVQKNDILREIIIKPGDFYQDVDPGSVKIESGQLLQPGQDVFPGVTVSTLSQAEWIESPEGNGLLLRPVEEYKVFDEPAAPSQGSQNEEGGRQIELRSVQRLFYKDGDRVKSVEGAPLLSTQLVLEIYGSGNEGISHLSADIELQDDEEEDCQRLQLVILESLVLRRDQESDPLGGASKTRLLVQDGDQIPPGAVVARTEIQCKEAGTVRGIKEGQESIRRVLLERAADRLVVDLPSAPEVKPGQLLVAGQELVPGVKLEESGKVLEINGKGDNYQLVLRRARPYRVSPGAVLHIEDGDLVQRGDNLVLLVFERAKTGDIVQGLPRIEELLEARKPKEACVLARAPGVCQVEYLEDESVDIKVVEDDGTVSEYPLLPGQNAMVTDGQRIDVGHALTDGYNNPHEILDVFFSYYVDKDGCYQAALRGLQAAQKFLVNEVQTVYQSQGVDISDKHIEVIVRQMTAKVRIDDGGDTTMLPGELVELRQVEQVNEAMGITGSAPARYTPVLLGITKASLNTDSFISAASFQETTRVLTEAAIEGKSDWLRGLKENVIIGRLIPAGTGFSSHEEVLGLIETQDDIQGYMIEPIELPTTKKKASATKVKTKKVEADDDLLDDTRARAYAGTQLSQDDEEFEETYDTDEDDFDMDDDDDFGDDED.

Positions 214, 286, 293, and 296 each coordinate Zn(2+). The segment at 1279–1317 is disordered; the sequence is RAYAGTQLSQDDEEFEETYDTDEDDFDMDDDDDFGDDED. Over residues 1288–1317 the composition is skewed to acidic residues; the sequence is QDDEEFEETYDTDEDDFDMDDDDDFGDDED.

It belongs to the RNA polymerase beta' chain family. RpoC2 subfamily. In cyanobacteria the RNAP catalytic core is composed of 2 alpha, 1 beta, 1 beta', 1 gamma and 1 omega subunit. When a sigma factor is associated with the core the holoenzyme is formed, which can initiate transcription. The cofactor is Zn(2+).

It catalyses the reaction RNA(n) + a ribonucleoside 5'-triphosphate = RNA(n+1) + diphosphate. Its function is as follows. DNA-dependent RNA polymerase catalyzes the transcription of DNA into RNA using the four ribonucleoside triphosphates as substrates. The polypeptide is DNA-directed RNA polymerase subunit beta' (Synechocystis sp. (strain ATCC 27184 / PCC 6803 / Kazusa)).